The sequence spans 239 residues: tRNA (guanine-N(7)-)-methyltransferase (239 aa).

Positions 68, 93, 120, and 143 each coordinate S-adenosyl-L-methionine. The active site involves aspartate 143. Residues lysine 147, aspartate 180, and threonine 217–glutamate 220 each bind substrate.

This sequence belongs to the class I-like SAM-binding methyltransferase superfamily. TrmB family.

The enzyme catalyses guanosine(46) in tRNA + S-adenosyl-L-methionine = N(7)-methylguanosine(46) in tRNA + S-adenosyl-L-homocysteine. It participates in tRNA modification; N(7)-methylguanine-tRNA biosynthesis. Its function is as follows. Catalyzes the formation of N(7)-methylguanine at position 46 (m7G46) in tRNA. The polypeptide is tRNA (guanine-N(7)-)-methyltransferase (Vibrio cholerae serotype O1 (strain ATCC 39541 / Classical Ogawa 395 / O395)).